The chain runs to 124 residues: Ribonuclease pancreatic (124 aa).

Basic and acidic residues predominate over residues 1 to 13 (KETAAEKFQRQHM). Residues 1 to 21 (KETAAEKFQRQHMDTSSSLSN) form a disordered region. Positions 7 and 10 each coordinate substrate. His12 (proton acceptor) is an active-site residue. 4 disulfides stabilise this stretch: Cys26–Cys84, Cys40–Cys95, Cys58–Cys110, and Cys65–Cys72. The N-linked (GlcNAc...) asparagine glycan is linked to Asn34. Residues 41 to 45 (KPVNT), Lys66, and Arg85 each bind substrate. The active-site Proton donor is His119.

Belongs to the pancreatic ribonuclease family. As to quaternary structure, monomer. Interacts with and forms tight 1:1 complexes with RNH1. Dimerization of two such complexes may occur. Interaction with RNH1 inhibits this protein. As to expression, pancreas.

It localises to the secreted. The enzyme catalyses an [RNA] containing cytidine + H2O = an [RNA]-3'-cytidine-3'-phosphate + a 5'-hydroxy-ribonucleotide-3'-[RNA].. It catalyses the reaction an [RNA] containing uridine + H2O = an [RNA]-3'-uridine-3'-phosphate + a 5'-hydroxy-ribonucleotide-3'-[RNA].. Endonuclease that catalyzes the cleavage of RNA on the 3' side of pyrimidine nucleotides. Acts on single-stranded and double-stranded RNA. The chain is Ribonuclease pancreatic (RNASE1) from Hippopotamus amphibius (Hippopotamus).